A 160-amino-acid chain; its full sequence is Phosphopantetheine adenylyltransferase (160 aa).

Ser8 is a binding site for substrate. ATP-binding positions include 8 to 9 (SF) and His16. Residues Lys40, Leu74, and Lys88 each contribute to the substrate site. ATP-binding positions include 89–91 (GLR), Glu99, and 124–130 (YSFVSST).

This sequence belongs to the bacterial CoaD family. Homohexamer. Mg(2+) serves as cofactor.

It is found in the cytoplasm. It carries out the reaction (R)-4'-phosphopantetheine + ATP + H(+) = 3'-dephospho-CoA + diphosphate. It participates in cofactor biosynthesis; coenzyme A biosynthesis; CoA from (R)-pantothenate: step 4/5. Its function is as follows. Reversibly transfers an adenylyl group from ATP to 4'-phosphopantetheine, yielding dephospho-CoA (dPCoA) and pyrophosphate. The polypeptide is Phosphopantetheine adenylyltransferase (Thermus thermophilus (strain ATCC BAA-163 / DSM 7039 / HB27)).